Consider the following 241-residue polypeptide: Polycomb group RING finger protein 3 (241 aa).

The RING-type zinc finger occupies 17–56; it reads CRLCSGYLIDATTVTECLHTFCRSCLVKYLEENNTCPTCR. Residues 115–148 are disordered; that stretch reads AKQHLDPRNGETKADDNSNKETAEEKQEEDNDYH. The segment covering 117–139 has biased composition (basic and acidic residues); that stretch reads QHLDPRNGETKADDNSNKETAEE. The segment at 131 to 241 is interaction with BCORL1; sequence NSNKETAEEK…LHYRPKMDLL (111 aa).

In terms of assembly, component of a PRC1-like complex that contains PCGF3, RNF2 and RYBP. Interacts with RNF2. Interacts with CBX6, CBX7 and CBX8. Interacts with BCORL1.

It localises to the nucleus. It is found in the nucleoplasm. Its function is as follows. Component of a Polycomb group (PcG) multiprotein PRC1-like complex, a complex class required to maintain the transcriptionally repressive state of many genes, including Hox genes, throughout development. PcG PRC1 complex acts via chromatin remodeling and modification of histones; it mediates monoubiquitination of histone H2A 'Lys-119', rendering chromatin heritably changed in its expressibility. Within the PRC1-like complex, regulates RNF2 ubiquitin ligase activity. Plays a redundant role with PCGF5 as part of a PRC1-like complex that mediates monoubiquitination of histone H2A 'Lys-119' on the X chromosome and is required for normal silencing of one copy of the X chromosome in XX females. The sequence is that of Polycomb group RING finger protein 3 (PcgF3) from Mus musculus (Mouse).